The sequence spans 115 residues: Large ribosomal subunit protein bL20 (115 aa).

This sequence belongs to the bacterial ribosomal protein bL20 family.

Binds directly to 23S ribosomal RNA and is necessary for the in vitro assembly process of the 50S ribosomal subunit. It is not involved in the protein synthesizing functions of that subunit. This Prochlorococcus marinus (strain MIT 9313) protein is Large ribosomal subunit protein bL20.